The following is a 208-amino-acid chain: MGLDFTLVADAEDLVAGVDEVGRGPLCGAVVTAAVILDPTRPILGLNDSKKLTEARREKLFDEICEKALSWCIARAEVEEIDELNILHATMLAMQRAVEGLSVTPKLAMIDGNRCPKLAMPAEAVVKGDSKVPAIAAASILAKVSRDREMAAFELIYPGYGIGGHKGYPTPVHLEALARLGPTPIHRRSFAPVRQAYEAREALGEIQS.

Positions 13–202 (DLVAGVDEVG…VRQAYEAREA (190 aa)) constitute an RNase H type-2 domain. A divalent metal cation is bound by residues Asp19, Glu20, and Asp111.

The protein belongs to the RNase HII family. It depends on Mn(2+) as a cofactor. Mg(2+) serves as cofactor.

It is found in the cytoplasm. It carries out the reaction Endonucleolytic cleavage to 5'-phosphomonoester.. Functionally, endonuclease that specifically degrades the RNA of RNA-DNA hybrids. In Pseudomonas fluorescens (strain ATCC BAA-477 / NRRL B-23932 / Pf-5), this protein is Ribonuclease HII.